The primary structure comprises 251 residues: Carboxy-S-adenosyl-L-methionine synthase (251 aa).

S-adenosyl-L-methionine-binding positions include Tyr-48, 73-75 (GCS), Asn-140, and Arg-207.

This sequence belongs to the class I-like SAM-binding methyltransferase superfamily. Cx-SAM synthase family. In terms of assembly, homodimer.

It catalyses the reaction prephenate + S-adenosyl-L-methionine = carboxy-S-adenosyl-L-methionine + 3-phenylpyruvate + H2O. Catalyzes the conversion of S-adenosyl-L-methionine (SAM) to carboxy-S-adenosyl-L-methionine (Cx-SAM). This Hydrogenovibrio crunogenus (strain DSM 25203 / XCL-2) (Thiomicrospira crunogena) protein is Carboxy-S-adenosyl-L-methionine synthase.